The chain runs to 149 residues: UPF0260 protein Avin_32930 (149 aa).

Belongs to the UPF0260 family.

This chain is UPF0260 protein Avin_32930, found in Azotobacter vinelandii (strain DJ / ATCC BAA-1303).